The primary structure comprises 199 residues: Putative HMP/thiamine permease protein YkoE (199 aa).

Helical transmembrane passes span 9–29 (IVIMSVISIVFAVVYLLFTHF), 40–60 (IAYEPIYGIWFIVSVIAAYMI), 63–83 (PGAALVSEIIAALVECLLGNP), 85–105 (GPMVIVIGIVQGLGAEAVFLA), 114–134 (PVLMLAGMGSSVASFIYDLFV), and 143–163 (GYLLIMLVIRLISGALLAGLL).

The complex is composed of two ATP-binding proteins (YkoD), two transmembrane proteins (YkoC and YkoE) and a solute-binding protein (YkoF).

Its subcellular location is the cell membrane. In terms of biological role, part of the ABC transporter complex YkoCDEF that could transport hydroxymethylpyrimidine (HMP) and/or thiamine. Could also transport other HMP-containing products. Probably responsible for the translocation of the substrate across the membrane. The sequence is that of Putative HMP/thiamine permease protein YkoE (ykoE) from Bacillus subtilis (strain 168).